Consider the following 184-residue polypeptide: MKNLTDSFVYLGHWPSAGSFGFNTDILATNPINLSVVLGVLIFFGKGVLNDLLDNRKQRILNTIRNSDELREGAIQQLENARARLRKVETEADKFRVNGYSEIEREKLNLINSTDKTLKQLENYKNETILFEQQKTINQVRERVFQQALQGAIGTLNSCLNNELHLRTINANIGMFGTMKETTD.

A helical transmembrane segment spans residues 27–49 (LATNPINLSVVLGVLIFFGKGVL).

The protein belongs to the ATPase B chain family. In terms of assembly, F-type ATPases have 2 components, F(1) - the catalytic core - and F(0) - the membrane proton channel. F(1) has five subunits: alpha(3), beta(3), gamma(1), delta(1), epsilon(1). F(0) has four main subunits: a(1), b(1), b'(1) and c(10-14). The alpha and beta chains form an alternating ring which encloses part of the gamma chain. F(1) is attached to F(0) by a central stalk formed by the gamma and epsilon chains, while a peripheral stalk is formed by the delta, b and b' chains.

It is found in the plastid. The protein resides in the chloroplast thylakoid membrane. In terms of biological role, f(1)F(0) ATP synthase produces ATP from ADP in the presence of a proton or sodium gradient. F-type ATPases consist of two structural domains, F(1) containing the extramembraneous catalytic core and F(0) containing the membrane proton channel, linked together by a central stalk and a peripheral stalk. During catalysis, ATP synthesis in the catalytic domain of F(1) is coupled via a rotary mechanism of the central stalk subunits to proton translocation. Its function is as follows. Component of the F(0) channel, it forms part of the peripheral stalk, linking F(1) to F(0). The sequence is that of ATP synthase subunit b, chloroplastic from Lepidium virginicum (Virginia pepperweed).